A 453-amino-acid polypeptide reads, in one-letter code: Ankyrin repeat and SOCS box protein 16 (453 aa).

ANK repeat units lie at residues 56 to 85 (CRDPAVHNALFSGDLQQLQILFQDEDAANM), 110 to 139 (KQTAPLTIAVARGYTDCARHLILQGAELDA), 142 to 171 (GGRAALHEACAQAHPDCVRLLLTFGAKANV), 175 to 204 (EGMTPLHLCTSPESLQCAKLLLEAGASVNV), 209 to 238 (SEVTPLHVAAARGLEQHVALYLQNGADVAL), 242 to 279 (QGETALNAACAGAEGPGSSRQHEAAARQLLEAGADPQA), and 283 to 312 (KRHTPLHNACANGCGGLAELLLRHGASPGV). The 57-residue stretch at 397-453 (FYSSALSMENQPRQLQHLARLAVRAQLGSHCRQAAAQLPLPPLLRDYLLLGVEGRIQ) folds into the SOCS box domain.

Belongs to the ankyrin SOCS box (ASB) family.

The protein operates within protein modification; protein ubiquitination. Functionally, may be a substrate-recognition component of a SCF-like ECS (Elongin-Cullin-SOCS-box protein) E3 ubiquitin-protein ligase complex which mediates the ubiquitination and subsequent proteasomal degradation of target proteins. The polypeptide is Ankyrin repeat and SOCS box protein 16 (Asb16) (Mus musculus (Mouse)).